The primary structure comprises 196 residues: Beta-crystallin A4 (196 aa).

The residue at position 2 (Thr-2) is an N-acetylthreonine. The interval 2-11 (TLQCTKSAGH) is N-terminal arm. Beta/gamma crystallin 'Greek key' domains lie at 12–51 (WRMV…KVLS) and 52–98 (GAWV…RPVA). The connecting peptide stretch occupies residues 99-104 (CANHRD). Beta/gamma crystallin 'Greek key' domains are found at residues 105–146 (SRLT…HVQS) and 147–195 (GAWV…RRIQ).

Belongs to the beta/gamma-crystallin family. In terms of assembly, homo/heterodimer, or complexes of higher-order. The structure of beta-crystallin oligomers seems to be stabilized through interactions between the N-terminal arms.

Crystallins are the dominant structural components of the vertebrate eye lens. The chain is Beta-crystallin A4 (Cryba4) from Mus musculus (Mouse).